The following is a 957-amino-acid chain: Glycine dehydrogenase (decarboxylating) (957 aa).

K708 carries the N6-(pyridoxal phosphate)lysine modification.

Belongs to the GcvP family. In terms of assembly, the glycine cleavage system is composed of four proteins: P, T, L and H. Pyridoxal 5'-phosphate is required as a cofactor.

The catalysed reaction is N(6)-[(R)-lipoyl]-L-lysyl-[glycine-cleavage complex H protein] + glycine + H(+) = N(6)-[(R)-S(8)-aminomethyldihydrolipoyl]-L-lysyl-[glycine-cleavage complex H protein] + CO2. The glycine cleavage system catalyzes the degradation of glycine. The P protein binds the alpha-amino group of glycine through its pyridoxal phosphate cofactor; CO(2) is released and the remaining methylamine moiety is then transferred to the lipoamide cofactor of the H protein. In Escherichia coli (strain ATCC 8739 / DSM 1576 / NBRC 3972 / NCIMB 8545 / WDCM 00012 / Crooks), this protein is Glycine dehydrogenase (decarboxylating).